The chain runs to 429 residues: Keratin, type I cytoskeletal 20 (429 aa).

The segment at 1-26 (MDFSRRSFHRSLSSSSQGPALSTSGS) is disordered. Residues 1-74 (MDFSRRSFHR…SNGGDLFGGN (74 aa)) form a head region. Low complexity predominate over residues 10–26 (RSLSSSSQGPALSTSGS). 3 positions are modified to phosphoserine: serine 13, serine 16, and serine 26. Positions 75–110 (EKLAMQNLNDRLASYLEKVRSLEQSNSKLEAQIKQW) are coil 1A. One can recognise an IF rod domain in the interval 75–386 (EKLAMQNLND…RLLEGEDIKT (312 aa)). Residues 111–128 (YETNAPSTIRDYSSYYAQ) form a linker 1 region. The segment at 129–220 (IKELQDQIKD…KEHQEEVEVL (92 aa)) is coil 1B. Positions 221-243 (RRQLGNNVNVEVDAAPGLNLGEI) are linker 12. The coil 2 stretch occupies residues 244 to 382 (MNEMRQKYEI…ATYRRLLEGE (139 aa)). The tract at residues 383 to 429 (DIKTTEYQLNTLEAKDIKKTRKIKTVVEEVVDGKVVSSEVKEIEENI) is tail.

Belongs to the intermediate filament family. In terms of assembly, heterotetramer of two type I and two type II keratins. Associates with KRT8. Hyperphosphorylation at Ser-13 occurs during the early stages of apoptosis but becomes less prominent during the later stages. Phosphorylation at Ser-13 also increases in response to stress brought on by cell injury. In terms of processing, proteolytically cleaved by caspases during apoptosis. Cleavage occurs at Asp-233. As to expression, expressed predominantly in the intestinal epithelium in differentiated villus cells.

Plays a significant role in maintaining keratin filament organization in intestinal epithelia. When phosphorylated, plays a role in the secretion of mucin in the small intestine. The chain is Keratin, type I cytoskeletal 20 (Krt20) from Rattus norvegicus (Rat).